We begin with the raw amino-acid sequence, 252 residues long: Probable NADP-dependent dehydrogenase HI_1430 (252 aa).

NADP(+) is bound at residue 7–31 (LVTGATAGFGLAICKKLIEAGYKVI). Serine 137 is a substrate binding site. Tyrosine 150 serves as the catalytic Proton acceptor.

The protein belongs to the short-chain dehydrogenases/reductases (SDR) family.

This chain is Probable NADP-dependent dehydrogenase HI_1430, found in Haemophilus influenzae (strain ATCC 51907 / DSM 11121 / KW20 / Rd).